Reading from the N-terminus, the 1327-residue chain is Kinectin (1327 aa).

The Cytoplasmic segment spans residues 1-8 (MELYESTY). A helical; Signal-anchor for type II membrane protein membrane pass occupies residues 9–29 (FIVLIPSVVITVIFLFFWLFM). The Lumenal portion of the chain corresponds to 30-1327 (KETLYDEVLA…EVNQQLTKET (1298 aa)). 2 disordered regions span residues 49 to 181 (STKT…EQDK) and 197 to 216 (LSHQDTKQEGGLGKKKGLSK). N-linked (GlcNAc...) asparagine glycosylation occurs at Asn69. 2 stretches are compositionally biased toward basic and acidic residues: residues 73-86 (RESDSEHVPRDFKL) and 111-135 (VRERQKKEKKQKPSLEEQVIKESDA). Ser75 and Ser77 each carry phosphoserine. Residues 163–173 (LKKKAGQKKSK) show a composition bias toward basic residues. Positions 329 to 1327 (ELSGLLHQLQ…EVNQQLTKET (999 aa)) form a coiled coil. N-linked (GlcNAc...) asparagine glycosylation is present at Asn1031. Ser1060 is modified (phosphoserine). Asn1066 carries N-linked (GlcNAc...) asparagine glycosylation. Ser1290 carries the phosphoserine modification.

The protein belongs to the kinectin family. Expressed in all tissues examined including 12-day embryo, adult heart, brain, ovary, kidney, lung, small intestine, spleen, thymus and pancreas.

It is found in the endoplasmic reticulum membrane. Functionally, receptor for kinesin thus involved in kinesin-driven vesicle motility. Accumulates in integrin-based adhesion complexes (IAC) upon integrin aggregation by fibronectin. The chain is Kinectin from Mus musculus (Mouse).